The chain runs to 98 residues: NADH-ubiquinone oxidoreductase chain 4L (98 aa).

3 helical membrane-spanning segments follow: residues 1-21 (MTLVHMNLLLAFAMSLTGLLM), 26-46 (LMSALLCLEGMVLSLFILATI), and 59-79 (MPIILLVFAACEAAIGLALLV).

It belongs to the complex I subunit 4L family. As to quaternary structure, core subunit of respiratory chain NADH dehydrogenase (Complex I) which is composed of 45 different subunits.

It is found in the mitochondrion inner membrane. It catalyses the reaction a ubiquinone + NADH + 5 H(+)(in) = a ubiquinol + NAD(+) + 4 H(+)(out). Core subunit of the mitochondrial membrane respiratory chain NADH dehydrogenase (Complex I) which catalyzes electron transfer from NADH through the respiratory chain, using ubiquinone as an electron acceptor. Part of the enzyme membrane arm which is embedded in the lipid bilayer and involved in proton translocation. The chain is NADH-ubiquinone oxidoreductase chain 4L (MT-ND4L) from Pontoporia blainvillei (Franciscana).